The sequence spans 108 residues: Small proline-rich protein 5 (108 aa).

The span at 1–13 shows a compositional bias: low complexity; it reads MSQQKQKQCAPPQ. 2 disordered regions span residues 1 to 24 and 73 to 108; these read MSQQKQKQCAPPQQCCPPPQQRCP and PPPQQTKQPCQPPPKCQEPCAPKCPPPQQCQTSKQK. Pro residues-rich tracts occupy residues 14–24 and 73–100; these read QCCPPPQQRCP and PPPQQTKQPCQPPPKCQEPCAPKCPPPQ.

Positively regulates keratinocyte differentiation by inducing genes associated with epidermal differentiation. The sequence is that of Small proline-rich protein 5 from Homo sapiens (Human).